We begin with the raw amino-acid sequence, 350 residues long: Pleckstrin (350 aa).

A PH 1 domain is found at 4-101 (KRIREGYLVK…WVRDIKKAIK (98 aa)). An N6-acetyllysine modification is found at Lys64. Ser113 and Ser117 each carry phosphoserine. Positions 136 to 221 (PEKGIKELNL…SPDAFYYFPD (86 aa)) constitute a DEP domain. The PH 2 domain occupies 244 to 347 (VIIKQGCLLK…WIKAIQVASR (104 aa)).

Major protein kinase C substrate of platelets. This chain is Pleckstrin (Plek), found in Mus musculus (Mouse).